A 476-amino-acid chain; its full sequence is Adenosylhomocysteinase (476 aa).

Residues Thr62, Asp141, and Glu201 each coordinate substrate. 202–204 serves as a coordination point for NAD(+); that stretch reads TTT. Substrate is bound by residues Lys231 and Asp235. NAD(+) is bound by residues Asn236, 265-270, Glu288, Asn323, 344-346, and Asn389; these read GYGDVG and IGH.

It belongs to the adenosylhomocysteinase family. Requires NAD(+) as cofactor.

The protein localises to the cytoplasm. It carries out the reaction S-adenosyl-L-homocysteine + H2O = L-homocysteine + adenosine. It functions in the pathway amino-acid biosynthesis; L-homocysteine biosynthesis; L-homocysteine from S-adenosyl-L-homocysteine: step 1/1. Its function is as follows. May play a key role in the regulation of the intracellular concentration of adenosylhomocysteine. The polypeptide is Adenosylhomocysteinase (Myxococcus xanthus (strain DK1622)).